Reading from the N-terminus, the 291-residue chain is Tryptophan 2,3-dioxygenase (291 aa).

Substrate contacts are provided by residues 51-55 (FIIQH), Tyr-113, and Arg-117. His-240 contacts heme. Position 254 (Thr-254) interacts with substrate.

Belongs to the tryptophan 2,3-dioxygenase family. Homotetramer. It depends on heme as a cofactor.

It catalyses the reaction L-tryptophan + O2 = N-formyl-L-kynurenine. It participates in amino-acid degradation; L-tryptophan degradation via kynurenine pathway; L-kynurenine from L-tryptophan: step 1/2. Heme-dependent dioxygenase that catalyzes the oxidative cleavage of the L-tryptophan (L-Trp) pyrrole ring and converts L-tryptophan to N-formyl-L-kynurenine. Catalyzes the oxidative cleavage of the indole moiety. This Myxococcus xanthus (strain DK1622) protein is Tryptophan 2,3-dioxygenase.